A 605-amino-acid chain; its full sequence is Adenine deaminase (605 aa).

The protein belongs to the metallo-dependent hydrolases superfamily. Adenine deaminase family. Mn(2+) serves as cofactor.

It carries out the reaction adenine + H2O + H(+) = hypoxanthine + NH4(+). The protein is Adenine deaminase of Staphylothermus marinus (strain ATCC 43588 / DSM 3639 / JCM 9404 / F1).